The following is a 350-amino-acid chain: Phenylalanine--tRNA ligase alpha subunit (350 aa).

Mg(2+) is bound at residue E271.

The protein belongs to the class-II aminoacyl-tRNA synthetase family. Phe-tRNA synthetase alpha subunit type 1 subfamily. As to quaternary structure, tetramer of two alpha and two beta subunits. The cofactor is Mg(2+).

It localises to the cytoplasm. The catalysed reaction is tRNA(Phe) + L-phenylalanine + ATP = L-phenylalanyl-tRNA(Phe) + AMP + diphosphate + H(+). The protein is Phenylalanine--tRNA ligase alpha subunit of Delftia acidovorans (strain DSM 14801 / SPH-1).